We begin with the raw amino-acid sequence, 236 residues long: Phosphoribosylaminoimidazole-succinocarboxamide synthase (236 aa).

This sequence belongs to the SAICAR synthetase family.

The enzyme catalyses 5-amino-1-(5-phospho-D-ribosyl)imidazole-4-carboxylate + L-aspartate + ATP = (2S)-2-[5-amino-1-(5-phospho-beta-D-ribosyl)imidazole-4-carboxamido]succinate + ADP + phosphate + 2 H(+). Its pathway is purine metabolism; IMP biosynthesis via de novo pathway; 5-amino-1-(5-phospho-D-ribosyl)imidazole-4-carboxamide from 5-amino-1-(5-phospho-D-ribosyl)imidazole-4-carboxylate: step 1/2. The chain is Phosphoribosylaminoimidazole-succinocarboxamide synthase from Campylobacter jejuni (strain RM1221).